Here is a 132-residue protein sequence, read N- to C-terminus: Translation initiation factor 5A (132 aa).

Residue K36 is modified to Hypusine.

The protein belongs to the eIF-5A family.

The protein resides in the cytoplasm. In terms of biological role, functions by promoting the formation of the first peptide bond. The chain is Translation initiation factor 5A (eIF5A) from Desulfurococcus amylolyticus (strain DSM 18924 / JCM 16383 / VKM B-2413 / 1221n) (Desulfurococcus kamchatkensis).